The chain runs to 389 residues: Chalcone synthase J (389 aa).

Cysteine 164 is an active-site residue.

Belongs to the thiolase-like superfamily. Chalcone/stilbene synthases family.

It carries out the reaction (E)-4-coumaroyl-CoA + 3 malonyl-CoA + 3 H(+) = 2',4,4',6'-tetrahydroxychalcone + 3 CO2 + 4 CoA. It functions in the pathway secondary metabolite biosynthesis; flavonoid biosynthesis. Functionally, the primary product of this enzyme is 4,2',4',6'-tetrahydroxychalcone (also termed naringenin-chalcone or chalcone) which can under specific conditions spontaneously isomerize into naringenin. This is Chalcone synthase J (CHSJ) from Petunia hybrida (Petunia).